The primary structure comprises 377 residues: Transcription initiation factor IIA subunit 1 (377 aa).

At alanine 2 the chain carries N-acetylalanine. Composition is skewed to low complexity over residues 69–79 (QVQQQHQPQQQ), 89–105 (QAQPQQTVPQQAQTQQV), and 248–280 (QAQIPAAGQQQPQAQPAQQQAPLVLQVDGTGDT). Disordered regions lie at residues 69 to 107 (QVQQQHQPQQQQHHHHHHHQQAQPQQTVPQQAQTQQVLI) and 248 to 330 (QAQI…QELF). Residues serine 281 and serine 282 each carry the phosphoserine; by TAF1 modification. Over residues 281 to 330 (SSEEDEDEEEDYDDDEEEDKEKDGAEDGQVEEEPLNSEDDVSDEEGQELF) the composition is skewed to acidic residues. Serine 317 and serine 322 each carry phosphoserine. 2 residues coordinate DNA: histidine 344 and arginine 345.

Belongs to the TFIIA subunit 1 family. In terms of assembly, TFIIA is a heterodimer of the large unprocessed subunit 1 and a small subunit gamma. It was originally believed to be a heterotrimer of an alpha (p35), a beta (p19) and a gamma subunit (p12). TFIIA forms a complex with TBP. Part of TBP-based Pol II pre-initiation complex (PIC), in which Pol II core assembles with general transcription factors and other specific initiation factors including GTF2E1, GTF2E2, GTF2F1, GTF2F2, TCEA1, ERCC2, ERCC3, GTF2H2, GTF2H3, GTF2H4, GTF2H5, GTF2A1, GTF2A2, GTF2B and TBP; this large multi-subunit PIC complex mediates DNA unwinding and targets Pol II core to the transcription start site where the first phosphodiester bond forms. The alpha and beta subunits are postranslationally produced from the precursor formby TASP1. The cleavage promotes proteasomal degradation.

The protein resides in the nucleus. In terms of biological role, TFIIA is a component of the transcription machinery of RNA polymerase II and plays an important role in transcriptional activation. TFIIA in a complex with TBP mediates transcriptional activity. This Rattus norvegicus (Rat) protein is Transcription initiation factor IIA subunit 1 (Gtf2a1).